We begin with the raw amino-acid sequence, 786 residues long: Sucrose synthase (786 aa).

Positions 259–736 (MIFSLVVLSP…ALKRVEERYN (478 aa)) are GT-B glycosyltransferase.

This sequence belongs to the glycosyltransferase 1 family. Homotetramer.

It catalyses the reaction an NDP-alpha-D-glucose + D-fructose = a ribonucleoside 5'-diphosphate + sucrose + H(+). In terms of biological role, catalyzes the reversible conversion of sucrose and a nucleotide disphosphate (NDP) into fructose and NDP-glucose; although the reaction is freely reversible in vitro, the physiological reaction seems to be sucrose cleavage. Unlike characterized plant enzymes prefers ADP as a cosubstrate, whereas plants prefer UDP. Its preference for ADP over UDP suggests it may directly link sucrose and glycogen metabolism. This chain is Sucrose synthase, found in Denitrovibrio acetiphilus (strain DSM 12809 / NBRC 114555 / N2460).